A 464-amino-acid chain; its full sequence is tRNA modification GTPase MnmE (464 aa).

(6S)-5-formyl-5,6,7,8-tetrahydrofolate contacts are provided by Arg-23, Glu-84, and Arg-123. A TrmE-type G domain is found at 216 to 386 (GARATLVGRP…LGATVARLLL (171 aa)). Asn-226 provides a ligand contact to K(+). GTP is bound by residues 226-231 (NAGKSS), 245-251 (TPIPGTT), and 270-273 (DTAG). Position 230 (Ser-230) interacts with Mg(2+). K(+)-binding residues include Thr-245, Ile-247, and Thr-250. Thr-251 is a binding site for Mg(2+). Lys-464 lines the (6S)-5-formyl-5,6,7,8-tetrahydrofolate pocket.

This sequence belongs to the TRAFAC class TrmE-Era-EngA-EngB-Septin-like GTPase superfamily. TrmE GTPase family. As to quaternary structure, homodimer. Heterotetramer of two MnmE and two MnmG subunits. The cofactor is K(+).

It localises to the cytoplasm. Exhibits a very high intrinsic GTPase hydrolysis rate. Involved in the addition of a carboxymethylaminomethyl (cmnm) group at the wobble position (U34) of certain tRNAs, forming tRNA-cmnm(5)s(2)U34. In Roseiflexus castenholzii (strain DSM 13941 / HLO8), this protein is tRNA modification GTPase MnmE.